Consider the following 616-residue polypeptide: Dihydroxy-acid dehydratase (616 aa).

Asp81 contacts Mg(2+). Cys122 contacts [2Fe-2S] cluster. Residues Asp123 and Lys124 each contribute to the Mg(2+) site. Residue Lys124 is modified to N6-carboxylysine. Cys195 contacts [2Fe-2S] cluster. Glu491 contacts Mg(2+). Ser517 (proton acceptor) is an active-site residue.

This sequence belongs to the IlvD/Edd family. In terms of assembly, homodimer. [2Fe-2S] cluster is required as a cofactor. Mg(2+) serves as cofactor.

It carries out the reaction (2R)-2,3-dihydroxy-3-methylbutanoate = 3-methyl-2-oxobutanoate + H2O. It catalyses the reaction (2R,3R)-2,3-dihydroxy-3-methylpentanoate = (S)-3-methyl-2-oxopentanoate + H2O. The protein operates within amino-acid biosynthesis; L-isoleucine biosynthesis; L-isoleucine from 2-oxobutanoate: step 3/4. It functions in the pathway amino-acid biosynthesis; L-valine biosynthesis; L-valine from pyruvate: step 3/4. Its function is as follows. Functions in the biosynthesis of branched-chain amino acids. Catalyzes the dehydration of (2R,3R)-2,3-dihydroxy-3-methylpentanoate (2,3-dihydroxy-3-methylvalerate) into 2-oxo-3-methylpentanoate (2-oxo-3-methylvalerate) and of (2R)-2,3-dihydroxy-3-methylbutanoate (2,3-dihydroxyisovalerate) into 2-oxo-3-methylbutanoate (2-oxoisovalerate), the penultimate precursor to L-isoleucine and L-valine, respectively. The protein is Dihydroxy-acid dehydratase of Salmonella dublin (strain CT_02021853).